The chain runs to 428 residues: MKKPFYKVLYVQVIFAIVVGVILGHYYPSLAVDMKPLGDGFIKLIKMVIGPIIFCTVVTGIAGMQDMKKVGRVGGKALLYFEIVSTCALVLGLAATHILRPGVGFNIDPATLNGKEVASYAAKAHGQSSVDFLMHIIPNTMIDAFAQGEILQILLIALLFGSVLAHLGERGRVVTDFIDGITRVLFGIVHIVTKLAPIGAFGAMAFTIGKYGVGSLVPLLKLIGTFYLTSVVFVLVVLGAIARFTGFSIIRFVGYIKEELLIVLGTSSSEAALPQLMEKLEKAGCSRSVVGLVVPTGYLFNLDGTNIYMTMAVLFIAQATNIELTWMQQLTLLAVAMLTSKGASGVTGAGFITLAATLAVVPTIPLSGMVLILGIDRFMSECRALTNIVGNGVATVVVSAWEKELDRAKLRAALSGNGEAAAGEAARV.

Transmembrane regions (helical) follow at residues 8-28 (VLYV…HYYP), 44-64 (LIKM…IAGM), 78-98 (LLYF…ATHI), 148-168 (GEIL…AHLG), 184-204 (VLFG…FGAM), 222-242 (LIGT…GAIA), 307-327 (IYMT…LTWM), and 355-375 (AATL…ILGI).

This sequence belongs to the dicarboxylate/amino acid:cation symporter (DAACS) (TC 2.A.23) family.

It localises to the cell inner membrane. Responsible for the transport of dicarboxylates such as succinate, fumarate, and malate from the periplasm across the membrane. In Burkholderia mallei (strain ATCC 23344), this protein is C4-dicarboxylate transport protein.